Consider the following 205-residue polypeptide: Putative lipoprotein LppC (205 aa).

The signal sequence occupies residues 1–27 (MESPMTSTLHRTPLATAGLALVVALGG). C28 is lipidated: N-palmitoyl cysteine. C28 is lipidated: S-diacylglycerol cysteine. Positions 126–145 (GSTADGQTPAGGHSVPNSGG) are disordered.

Belongs to the UPF0098 family.

It localises to the cell membrane. This chain is Putative lipoprotein LppC (lppC), found in Mycobacterium tuberculosis (strain CDC 1551 / Oshkosh).